Here is a 187-residue protein sequence, read N- to C-terminus: Fibroblast growth factor 4A (187 aa).

The first 22 residues, 1–22, serve as a signal peptide directing secretion; it reads MTVPSALVPILLLGTAAVMVQC.

The protein belongs to the heparin-binding growth factors family.

It is found in the secreted. In terms of biological role, plays an important role in the regulation of embryonic development, cell proliferation, and cell differentiation. Good candidate for an inducing factor with possible roles both in mesoderm induction at the blastula stage and in the formation of the anteroposterior axis at the gastrula stage. The protein is Fibroblast growth factor 4A (fgf4-a) of Xenopus laevis (African clawed frog).